Reading from the N-terminus, the 449-residue chain is tRNA-2-methylthio-N(6)-dimethylallyladenosine synthase (449 aa).

Residues 13-128 form the MTTase N-terminal domain; it reads RRIFIETYGC…LPHLIGTVEK (116 aa). Positions 22, 58, 92, 166, 170, and 173 each coordinate [4Fe-4S] cluster. Positions 152–383 constitute a Radical SAM core domain; that stretch reads SRIKISGFIS…ITLQLKISLM (232 aa). The TRAM domain occupies 386-449; it reads KENIGKTMEI…AATLFGDPKL (64 aa).

This sequence belongs to the methylthiotransferase family. MiaB subfamily. In terms of assembly, monomer. [4Fe-4S] cluster serves as cofactor.

It localises to the cytoplasm. It catalyses the reaction N(6)-dimethylallyladenosine(37) in tRNA + (sulfur carrier)-SH + AH2 + 2 S-adenosyl-L-methionine = 2-methylsulfanyl-N(6)-dimethylallyladenosine(37) in tRNA + (sulfur carrier)-H + 5'-deoxyadenosine + L-methionine + A + S-adenosyl-L-homocysteine + 2 H(+). Catalyzes the methylthiolation of N6-(dimethylallyl)adenosine (i(6)A), leading to the formation of 2-methylthio-N6-(dimethylallyl)adenosine (ms(2)i(6)A) at position 37 in tRNAs that read codons beginning with uridine. The protein is tRNA-2-methylthio-N(6)-dimethylallyladenosine synthase of Azobacteroides pseudotrichonymphae genomovar. CFP2.